The sequence spans 1634 residues: Probable serine/threonine-protein kinase DDB_G0282895 (1634 aa).

The stretch at 40–63 is one MORN 1 repeat; it reads YKGNLNENKLKNGKGTFLFPNSIY. The interval 84-131 is disordered; sequence QKIQKKSSQSKSQQQPPSQTKKSSSPINLSPRLQGQNPTITTNGSNNN. Low complexity predominate over residues 89 to 109; it reads KSSQSKSQQQPPSQTKKSSSP. Positions 110–119 are enriched in polar residues; sequence INLSPRLQGQ. Positions 120–131 are enriched in low complexity; that stretch reads NPTITTNGSNNN. An MORN 2 repeat occupies 169-191; the sequence is YNGKWINGKANGIGCFHFSKDDS. 2 stretches are compositionally biased toward low complexity: residues 273–292 and 318–339; these read SNNN…LSPT and SGSG…PISS. Disordered stretches follow at residues 273–367, 658–750, and 783–816; these read SNNN…QQQQ, TTAT…TFSV, and SSIL…NCGQ. The span at 340 to 351 shows a compositional bias: polar residues; it reads GLQHSKTQPNVS. Composition is skewed to low complexity over residues 352-367, 658-688, and 703-715; these read QSQN…QQQQ, TTAT…TTTT, and PPSQ…SPSS. Residues 716-732 are compositionally biased toward polar residues; that stretch reads DQTNLPSIAISSSNGIS. Low complexity predominate over residues 787–813; the sequence is NNNNNNNNNNNNNNNNNNNNNNNNNNN. The chain crosses the membrane as a helical span at residues 1255 to 1275; the sequence is IFIGFMELCVIDELCGFSFIY. One can recognise a Protein kinase domain in the interval 1377-1634; it reads LQILQFLGEG…IIQKLCNHKC (258 aa). Residues 1383–1391 and lysine 1404 each bind ATP; that span reads LGEGALAEV. Aspartate 1500 acts as the Proton acceptor in catalysis.

It belongs to the protein kinase superfamily. TKL Ser/Thr protein kinase family.

It localises to the membrane. It carries out the reaction L-seryl-[protein] + ATP = O-phospho-L-seryl-[protein] + ADP + H(+). The enzyme catalyses L-threonyl-[protein] + ATP = O-phospho-L-threonyl-[protein] + ADP + H(+). This Dictyostelium discoideum (Social amoeba) protein is Probable serine/threonine-protein kinase DDB_G0282895.